The sequence spans 764 residues: Phenylalanine--tRNA ligase beta subunit (764 aa).

Residues 38–148 (CIAPKNVVVG…GELVLGKELN (111 aa)) form the tRNA-binding domain. In terms of domain architecture, B5 spans 375 to 455 (LKDRTLTFQL…RFVGIDNLVS (81 aa)). Residues Asp433, Asp439, Glu442, and Glu443 each coordinate Mg(2+). Residues 673-763 (SIYPSSVRDL…LEKEFNARLK (91 aa)) form the FDX-ACB domain.

Belongs to the phenylalanyl-tRNA synthetase beta subunit family. Type 1 subfamily. Tetramer of two alpha and two beta subunits. Requires Mg(2+) as cofactor.

The protein resides in the cytoplasm. The enzyme catalyses tRNA(Phe) + L-phenylalanine + ATP = L-phenylalanyl-tRNA(Phe) + AMP + diphosphate + H(+). The polypeptide is Phenylalanine--tRNA ligase beta subunit (pheT) (Helicobacter pylori (strain ATCC 700392 / 26695) (Campylobacter pylori)).